The primary structure comprises 94 residues: Large ribosomal subunit protein uL23 (94 aa).

This sequence belongs to the universal ribosomal protein uL23 family. As to quaternary structure, part of the 50S ribosomal subunit. Contacts protein L29, and trigger factor when it is bound to the ribosome.

In terms of biological role, one of the early assembly proteins it binds 23S rRNA. One of the proteins that surrounds the polypeptide exit tunnel on the outside of the ribosome. Forms the main docking site for trigger factor binding to the ribosome. The chain is Large ribosomal subunit protein uL23 from Exiguobacterium sibiricum (strain DSM 17290 / CCUG 55495 / CIP 109462 / JCM 13490 / 255-15).